Here is a 221-residue protein sequence, read N- to C-terminus: Proline-rich protein 20A (221 aa).

2 disordered regions span residues 1–103 (MEEP…QRQG) and 137–174 (SLSETGPPPGTVQEGPGPDVAQPELGFQEPPAAPGPQA). Residues 42-53 (PAQPAQPAKPIA) show a composition bias toward low complexity. Over residues 63-72 (PARPESPPPA) the composition is skewed to pro residues. Positions 75-93 (GRRRGGSRRPGRGRGRRAG) are enriched in basic residues.

This sequence belongs to the PRR20 family.

The polypeptide is Proline-rich protein 20A (PRR20A) (Homo sapiens (Human)).